Consider the following 164-residue polypeptide: tRNA (cytidine(34)-2'-O)-methyltransferase (164 aa).

The S-adenosyl-L-methionine site is built by Met80, Gly102, Val124, and Ser132.

This sequence belongs to the class IV-like SAM-binding methyltransferase superfamily. RNA methyltransferase TrmH family. TrmL subfamily. Homodimer.

It is found in the cytoplasm. The catalysed reaction is cytidine(34) in tRNA + S-adenosyl-L-methionine = 2'-O-methylcytidine(34) in tRNA + S-adenosyl-L-homocysteine + H(+). It catalyses the reaction 5-carboxymethylaminomethyluridine(34) in tRNA(Leu) + S-adenosyl-L-methionine = 5-carboxymethylaminomethyl-2'-O-methyluridine(34) in tRNA(Leu) + S-adenosyl-L-homocysteine + H(+). Methylates the ribose at the nucleotide 34 wobble position in the two leucyl isoacceptors tRNA(Leu)(CmAA) and tRNA(Leu)(cmnm5UmAA). Catalyzes the methyl transfer from S-adenosyl-L-methionine to the 2'-OH of the wobble nucleotide. This Polaromonas sp. (strain JS666 / ATCC BAA-500) protein is tRNA (cytidine(34)-2'-O)-methyltransferase.